The primary structure comprises 259 residues: Insulin-like growth factor-binding protein 1 (259 aa).

An N-terminal signal peptide occupies residues 1 to 25 (MSEVPVARVWLVLLLLTVQVGVTAG). The 82-residue stretch at 26 to 107 (APWQCAPCSA…TRGQGACVQE (82 aa)) folds into the IGFBP N-terminal domain. 6 cysteine pairs are disulfide-bonded: Cys-30/Cys-57, Cys-33/Cys-59, Cys-41/Cys-60, Cys-48/Cys-63, Cys-71/Cys-84, and Cys-78/Cys-104. At Ser-45 the chain carries Phosphoserine; by FAM20C. 4 positions are modified to phosphoserine: Ser-120, Ser-123, Ser-126, and Ser-144. A Phosphoserine; by FAM20C modification is found at Ser-156. Residue Thr-157 is modified to Phosphothreonine; by FAM20C. Residue Tyr-158 is modified to Phosphotyrosine. Residues 173–251 (KEPCRIELYR…SPEIRGDPNC (79 aa)) form the Thyroglobulin type-1 domain. 3 disulfide bridges follow: Cys-176–Cys-206, Cys-217–Cys-228, and Cys-230–Cys-251. Residue Thr-193 is modified to Phosphothreonine; by FAM20C. Residues Ser-194 and Ser-199 each carry the phosphoserine; by FAM20C modification. Ser-242 carries the post-translational modification Phosphoserine; by FAM20C. The Cell attachment site motif lies at 246–248 (RGD).

In terms of assembly, binds equally well IGF1 and IGF2. Interacts with integrin ITGA5:ITGB1. Interacts with VHL; this interaction inhibits HIF1A degradation. In terms of processing, phosphorylated; probably by casein kinase II. Phosphorylation alters the affinity of the protein for IGFs. In amniotic fluid, the unmodified protein is the most abundant form, while mono-, bi-, tri- and tetraphosphorylated forms are present in decreasing amounts. The phosphorylation state may influence the propensity to proteolysis.

It is found in the secreted. Functionally, multifunctional protein that plays a critical role in regulating the availability of IGFs such as IGF1 and IGF2 to their receptors and thereby regulates IGF-mediated cellular processes including cell migration, proliferation, differentiation or apoptosis in a cell-type specific manner. Also plays a positive role in cell migration by interacting with integrin ITGA5:ITGB1 through its RGD motif. Mechanistically, binding to integrins leads to activation of focal adhesion kinase/PTK2 and stimulation of the mitogen-activated protein kinase (MAPK) pathway. Regulates cardiomyocyte apoptosis by suppressing HIF-1alpha/HIF1A ubiquitination and subsequent degradation. The chain is Insulin-like growth factor-binding protein 1 (IGFBP1) from Homo sapiens (Human).